The chain runs to 120 residues: MATHNVHSCEFEVFGRVQGVNFRRHALRKAKTLGLRGWCMNSSRGTVKGYIEGRPAEMDVMKEWLRTTGSPLSSIEKVEFSSQRERDRYGYANFHIKPDPHENRPVHEGLGSSSSHHDSN.

Alanine 2 is modified (N-acetylalanine). The region spanning 8–98 is the Acylphosphatase-like domain; the sequence is SCEFEVFGRV…YGYANFHIKP (91 aa). Active-site residues include arginine 23 and asparagine 41. The interval 91 to 120 is disordered; it reads YANFHIKPDPHENRPVHEGLGSSSSHHDSN. The span at 96 to 107 shows a compositional bias: basic and acidic residues; that stretch reads IKPDPHENRPVH.

Belongs to the acylphosphatase family.

The protein localises to the cytoplasm. The catalysed reaction is an acyl phosphate + H2O = a carboxylate + phosphate + H(+). This is Acylphosphatase-1 (Acyp) from Drosophila melanogaster (Fruit fly).